The primary structure comprises 247 residues: 5'-nucleotidase SurE (247 aa).

A divalent metal cation is bound by residues D8, D9, S39, and N91.

Belongs to the SurE nucleotidase family. A divalent metal cation is required as a cofactor.

The protein resides in the cytoplasm. It carries out the reaction a ribonucleoside 5'-phosphate + H2O = a ribonucleoside + phosphate. Nucleotidase that shows phosphatase activity on nucleoside 5'-monophosphates. In Nitrosomonas europaea (strain ATCC 19718 / CIP 103999 / KCTC 2705 / NBRC 14298), this protein is 5'-nucleotidase SurE.